The sequence spans 471 residues: Regulator of microtubule dynamics protein 3 (471 aa).

The Mitochondrial intermembrane segment spans residues 1 to 9 (MSSLGTLGG). The chain crosses the membrane as a helical span at residues 10 to 32 (ARAGLGLLLGTAAGLGFLCALYS). The Cytoplasmic segment spans residues 33-471 (QRWKRTQRRG…LEELEVILGE (439 aa)). Residues 39-70 (QRRGQSQSQSNSLDYTQTSEPGRQVRPLRAAP) form a disordered region. Residues 41–50 (RGQSQSQSNS) show a composition bias toward low complexity. 4 positions are modified to phosphoserine: serine 44, serine 46, serine 50, and serine 57. Residues 90–123 (LDRLEFVLTSLVALRREVEELRSSLQGLAGQIVG) are a coiled coil. Positions 156 to 162 (VYFTAAS) match the FFAT motif. A Phosphothreonine modification is found at threonine 159. Positions 169 to 206 (AESEGGYTTANAESDYERDSERESDGDGEDEVSCETVK) are disordered. Phosphoserine is present on residues serine 182, serine 192, serine 212, and serine 233. A compositionally biased stretch (basic and acidic residues) spans 183-193 (DYERDSERESD).

Belongs to the RMDN family. As to quaternary structure, interacts with PTPN2. Interacts with microtubules. Interacts with VAPB. Interacts (via FFAT motif) with MOSPD2 (via MSP domain). Interacts (via phosphorylated FFAT motif) with MOSPD2, VAPA and VAPB. Phosphorylation at Thr-160 of the FFAT motif activates interaction with MOSPD2, VAPA and VAPB.

Its subcellular location is the mitochondrion outer membrane. The protein localises to the cytoplasm. The protein resides in the nucleus. It localises to the cytoskeleton. It is found in the spindle. Its subcellular location is the spindle pole. Involved in cellular calcium homeostasis regulation. May participate in differentiation and apoptosis of keratinocytes. Overexpression induces apoptosis. The polypeptide is Regulator of microtubule dynamics protein 3 (Bos taurus (Bovine)).